A 525-amino-acid chain; its full sequence is GMP synthase [glutamine-hydrolyzing] (525 aa).

Residues 9-207 enclose the Glutamine amidotransferase type-1 domain; that stretch reads RILILDFGSQ…ILDICGCEAL (199 aa). Cysteine 86 functions as the Nucleophile in the catalytic mechanism. Residues histidine 181 and glutamate 183 contribute to the active site. One can recognise a GMPS ATP-PPase domain in the interval 208–400; it reads WTPSKIAEDA…LGLPYDMVYR (193 aa). 235 to 241 is a binding site for ATP; that stretch reads SGGVDSS.

As to quaternary structure, homodimer.

The enzyme catalyses XMP + L-glutamine + ATP + H2O = GMP + L-glutamate + AMP + diphosphate + 2 H(+). Its pathway is purine metabolism; GMP biosynthesis; GMP from XMP (L-Gln route): step 1/1. Functionally, catalyzes the synthesis of GMP from XMP. The protein is GMP synthase [glutamine-hydrolyzing] of Pseudomonas fluorescens (strain ATCC BAA-477 / NRRL B-23932 / Pf-5).